The sequence spans 453 residues: Putative amino acid/polyamine transporter MPH_07630_2 (453 aa).

3 helical membrane passes run 2–21, 30–50, and 81–101; these read IGFS…VLVV, VMIW…YSMA, and VCGW…NFIA. A glycan (N-linked (GlcNAc...) asparagine) is linked at N110. The next 2 helical transmembrane spans lie at 121–141 and 151–171; these read WHAV…SIFL and AILI…LATN. N186 carries an N-linked (GlcNAc...) asparagine glycan. Helical transmembrane passes span 193-213 and 231-251; these read AYAA…YDAP and IVMS…SLCF. N-linked (GlcNAc...) asparagine glycosylation occurs at N274. The next 4 helical transmembrane spans lie at 277 to 297, 330 to 350, 358 to 378, and 403 to 423; these read GSVA…LVCA, LGVP…FNSI, FNTV…IPLL, and GLLA…TFNF. N-linked (GlcNAc...) asparagine glycosylation is present at N435.

The protein belongs to the amino acid-polyamine-organocation (APC) superfamily.

The protein localises to the membrane. The sequence is that of Putative amino acid/polyamine transporter MPH_07630_2 from Macrophomina phaseolina (strain MS6) (Charcoal rot fungus).